We begin with the raw amino-acid sequence, 317 residues long: Toluene-4-sulfonate monooxygenase system reductase subunit TsaB1 (317 aa).

An FAD-binding FR-type domain is found at 2–108 (SADVPVTVAA…RATCSEMAPE (107 aa)). 110–220 (RRVLLLAGGI…PGSVRMERFK (111 aa)) contributes to the NAD(+) binding site. The 2Fe-2S ferredoxin-type domain occupies 230-317 (QPFELVLQRA…CGGGRLVLDI (88 aa)). C266, C271, C274, and C304 together coordinate [2Fe-2S] cluster.

As to quaternary structure, monomer. Part of the p-toluenesulfonate methyl-monooxygenase complex TsaBM, comprising the reductase TsaB and the oxygenase TsaM. It depends on FMN as a cofactor.

In terms of biological role, iron-sulfur flavoprotein carrying electrons from NADH to the oxygenase TsaM. Involved in the toluene-4-sulfonate degradation pathway. The sequence is that of Toluene-4-sulfonate monooxygenase system reductase subunit TsaB1 (tsaB1) from Comamonas testosteroni (Pseudomonas testosteroni).